Here is a 348-residue protein sequence, read N- to C-terminus: NADH-ubiquinone oxidoreductase chain 2 (348 aa).

Helical transmembrane passes span 2 to 22 (SPYV…LTLF), 26 to 46 (WLMA…MMTY), 55 to 75 (AAIK…FAII), 96 to 116 (VLMT…FWVP), 149 to 169 (LNMK…GWGG), 178 to 198 (ILAY…MINP), 199 to 219 (SLAL…FLML), 242 to 262 (TAIL…GFMP), 276 to 296 (IIMA…YMRI), and 323 to 343 (INII…TPLL).

It belongs to the complex I subunit 2 family. As to quaternary structure, core subunit of respiratory chain NADH dehydrogenase (Complex I) which is composed of 45 different subunits. Interacts with TMEM242.

Its subcellular location is the mitochondrion inner membrane. The catalysed reaction is a ubiquinone + NADH + 5 H(+)(in) = a ubiquinol + NAD(+) + 4 H(+)(out). In terms of biological role, core subunit of the mitochondrial membrane respiratory chain NADH dehydrogenase (Complex I) that is believed to belong to the minimal assembly required for catalysis. Complex I functions in the transfer of electrons from NADH to the respiratory chain. The immediate electron acceptor for the enzyme is believed to be ubiquinone. The sequence is that of NADH-ubiquinone oxidoreductase chain 2 from Osphranter robustus (Wallaroo).